The following is a 389-amino-acid chain: MNPSVSSRPPWSTAFYLGPGFPIQWYGIIVAIGIAFGILMFVLKLIYFYKIQDNSFYFFIFIAVLTMVLGARAWYFLIEAVDGRSSGSNFFDFRNGGLAIQGGVLLTTLAGIIYFNVFLNMKTTKTKTTAKLLNNKNQIKTVYVERNISVFVMLDLIAPCVLIGQAIGRWGNFFNAEVYGAALVGSKNDTLSAANTTWGFLRILMPKVWDGMFINGSFRIPLFLIESFFNTIFFVFIYFVMDHIKGIRSGTIGFSYFLATGIVRLILETQRDEAFKYNTSIVFSALLILVGIVGIIYCQTLAIKLRGYFWTYFFLYGWYKVAAFFTTLFMKDRTQACSSKFAFYEKSLPEKERSFFQLKYYNDVLPPKIYRLYDHEMLMFDKLEAVPEA.

The next 4 membrane-spanning stretches (helical) occupy residues 28–48, 58–78, 98–118, and 148–168; these read IIVA…LIYF, FFIF…YFLI, LAIQ…FNVF, and ISVF…QAIG. Arg169 is a binding site for a 1,2-diacyl-sn-glycero-3-phospho-(1'-sn-glycerol). A run of 3 helical transmembrane segments spans residues 220 to 240, 281 to 301, and 309 to 329; these read IPLF…IYFV, IVFS…CQTL, and FWTY…TTLF.

It belongs to the Lgt family.

It localises to the cell membrane. It catalyses the reaction L-cysteinyl-[prolipoprotein] + a 1,2-diacyl-sn-glycero-3-phospho-(1'-sn-glycerol) = an S-1,2-diacyl-sn-glyceryl-L-cysteinyl-[prolipoprotein] + sn-glycerol 1-phosphate + H(+). The protein operates within protein modification; lipoprotein biosynthesis (diacylglyceryl transfer). Its function is as follows. Catalyzes the transfer of the diacylglyceryl group from phosphatidylglycerol to the sulfhydryl group of the N-terminal cysteine of a prolipoprotein, the first step in the formation of mature lipoproteins. The sequence is that of Phosphatidylglycerol--prolipoprotein diacylglyceryl transferase from Mycoplasma pneumoniae (strain ATCC 29342 / M129 / Subtype 1) (Mycoplasmoides pneumoniae).